The sequence spans 509 residues: Lengsin (509 aa).

The segment at 1–34 (MNNEEDLLQEDSTRDEGNETEANSMNTLRRTRKK) is disordered. Residues 83–177 (NRLQFVRFEA…VICDTFTVTG (95 aa)) enclose the GS beta-grasp domain. One can recognise a GS catalytic domain in the interval 184 to 509 (PRYIAKRQLS…ERNKFLEYFI (326 aa)).

Belongs to the glutamine synthetase family. In terms of assembly, dodecamer. Interacts with BFSP2 and VIM. Abundantly expressed in lens.

Its function is as follows. May act as a component of the cytoskeleton or as a chaperone for the reorganization of intermediate filament proteins during terminal differentiation in the lens. Does not seem to have enzymatic activity. This chain is Lengsin (LGSN), found in Homo sapiens (Human).